The chain runs to 530 residues: Tetrahydroberberine oxidase (530 aa).

A signal peptide spans 1 to 24 (MSKMASSIFATFSLLSSLLPTSLA). An intrachain disulfide couples cysteine 36 to cysteine 94. Asparagine 51 carries an N-linked (GlcNAc...) asparagine glycan. Residues 72–246 (TTPKPNFIVT…LAWKIRLVPV (175 aa)) enclose the FAD-binding PCMH-type domain. The 6-(S-cysteinyl)-8alpha-(pros-histidyl)-FAD (His-Cys) cross-link spans 109–171 (HDFEGLSYVS…GVHAFPAGLC (63 aa)). Asparagine 483 carries an N-linked (GlcNAc...) asparagine glycan.

It belongs to the oxygen-dependent FAD-linked oxidoreductase family. The cofactor is FAD. Post-translationally, the FAD cofactor is bound via a bicovalent 6-S-cysteinyl, 8alpha-N1-histidyl FAD linkage.

The enzyme catalyses (S)-canadine + 2 O2 + H(+) = berberine + 2 H2O2. In terms of biological role, catalyzes the oxidation of different tetrahydroprotoberberines, such as (S)-canadine, (S)-scoulerine and (S)-corypalmine. Catalyzes the oxidation of (S)-coreximine and (S)-tetrahydropalmatine. Catalyzes the oxidation of different 1-benzylisoquinoline alkaloids, such as (S)-norreticuline, (S)-nororientaline, (S)-coclaurine and (S)-norisoorientaline. Exhibits strict specificity for the (S)-enantiomer of tetrahydroprotoberbirines and 1-benzylisoquinoline alkaloids. In Berberis wilsoniae (Mrs Wilson's barberry), this protein is Tetrahydroberberine oxidase.